The primary structure comprises 143 residues: Transcriptional regulator MraZ (143 aa).

2 SpoVT-AbrB domains span residues 5–47 (EYHH…PIEE) and 76–119 (AMES…SAER).

It belongs to the MraZ family. As to quaternary structure, forms oligomers.

It is found in the cytoplasm. The protein resides in the nucleoid. The chain is Transcriptional regulator MraZ from Lactobacillus gasseri (strain ATCC 33323 / DSM 20243 / BCRC 14619 / CIP 102991 / JCM 1131 / KCTC 3163 / NCIMB 11718 / NCTC 13722 / AM63).